The sequence spans 1378 residues: Roundabout homolog 2 (1378 aa).

The N-terminal stretch at 1 to 21 (MSLLMFTQLLLCGFLYVRVDG) is a signal peptide. The Extracellular segment spans residues 22–859 (SRLRQEDFPP…EQITDVVKQP (838 aa)). Ig-like C2-type domains follow at residues 31–127 (PRIV…ASLE), 133–220 (DDFR…AELT), 225–309 (PTFL…ATLT), 314–409 (PQFV…LEVT), and 418–504 (PIIL…AVLD). Cysteine 52 and cysteine 110 are joined by a disulfide. Asparagine 123 carries N-linked (GlcNAc...) asparagine glycosylation. Cystine bridges form between cysteine 154-cysteine 203, cysteine 246-cysteine 293, and cysteine 335-cysteine 391. A glycan (N-linked (GlcNAc...) asparagine) is linked at asparagine 426. Cysteine 439 and cysteine 488 are disulfide-bonded. Fibronectin type-III domains lie at 524 to 618 (PPSK…TQDI), 637 to 735 (VLVR…TEEA), and 739 to 836 (PPQS…IGRR). The interval 603–625 (LSDPSPMSDPVRTQDISPPAQGV) is disordered. N-linked (GlcNAc...) asparagine glycosylation is found at asparagine 752, asparagine 782, asparagine 789, and asparagine 845. Residues 860-880 (AFIAGIGGACWVILMGFSIWL) traverse the membrane as a helical segment. The Cytoplasmic segment spans residues 881-1378 (YWRRKKRKGL…NSQGQFTGEL (498 aa)). 3 disordered regions span residues 1032–1084 (GFGY…PLPG), 1124–1156 (EDDD…LTPS), and 1215–1348 (DVAD…KTEV). The segment covering 1058–1067 (SSKPQKNNGS) has biased composition (low complexity). The segment covering 1141–1155 (PAISFGQQSTATLTP) has biased composition (polar residues). A Phosphothreonine modification is found at threonine 1154. A Phosphoserine modification is found at serine 1156. Over residues 1215–1228 (DVADDDADDEEEAL) the composition is skewed to acidic residues. The span at 1240 to 1285 (TPGSSMDNLDSSVTGKAFTSSQRPRPTSPFSTDSNTSAALSQSQRP) shows a compositional bias: polar residues. A compositionally biased stretch (low complexity) spans 1319–1343 (SKPSFPSPGGHSSSGTASSKGSTGP).

This sequence belongs to the immunoglobulin superfamily. ROBO family. In terms of assembly, interacts with SLIT2.

Its subcellular location is the membrane. Its function is as follows. Receptor for SLIT2, and probably SLIT1, which are thought to act as molecular guidance cue in cellular migration, including axonal navigation at the ventral midline of the neural tube and projection of axons to different regions during neuronal development. The polypeptide is Roundabout homolog 2 (ROBO2) (Homo sapiens (Human)).